Consider the following 148-residue polypeptide: Probable 4-amino-4-deoxy-L-arabinose-phosphoundecaprenol flippase subunit ArnF (148 aa).

The Cytoplasmic portion of the chain corresponds to Met-1–Tyr-23. The helical transmembrane segment at Leu-24–Val-44 threads the bilayer. Residues Met-45 to Pro-63 are Periplasmic-facing. The helical transmembrane segment at Leu-64–Ala-84 threads the bilayer. Residues Leu-85–Asn-91 are Cytoplasmic-facing. A helical membrane pass occupies residues Ile-92 to Pro-112. Residues Ser-113–Pro-117 are Periplasmic-facing. A helical membrane pass occupies residues Leu-118–Ile-138. Residues Lys-139–His-148 lie on the Cytoplasmic side of the membrane.

Belongs to the ArnF family. Heterodimer of ArnE and ArnF.

It localises to the cell inner membrane. It functions in the pathway bacterial outer membrane biogenesis; lipopolysaccharide biosynthesis. Translocates 4-amino-4-deoxy-L-arabinose-phosphoundecaprenol (alpha-L-Ara4N-phosphoundecaprenol) from the cytoplasmic to the periplasmic side of the inner membrane. This is Probable 4-amino-4-deoxy-L-arabinose-phosphoundecaprenol flippase subunit ArnF from Aeromonas salmonicida (strain A449).